The primary structure comprises 813 residues: LPS-assembly protein LptD (813 aa).

Positions 1-22 are cleaved as a signal peptide; sequence MRRALRLLPLPLSIAICLPAMA.

The protein belongs to the LptD family. In terms of assembly, component of the lipopolysaccharide transport and assembly complex. Interacts with LptE and LptA.

It is found in the cell outer membrane. In terms of biological role, together with LptE, is involved in the assembly of lipopolysaccharide (LPS) at the surface of the outer membrane. The protein is LPS-assembly protein LptD of Xanthomonas axonopodis pv. citri (strain 306).